The chain runs to 213 residues: Dimethylamine corrinoid protein 3 (213 aa).

The region spanning 1–91 (MADIEGLLHE…DLPAGAEKKL (91 aa)) is the B12-binding N-terminal domain. The B12-binding domain occupies 92-213 (GVIVNGTVEG…AVAKAKELLL (122 aa)). His104 is a binding site for methylcob(III)alamin.

It belongs to the methylamine corrinoid protein family.

Its pathway is one-carbon metabolism; methanogenesis from dimethylamine. In terms of biological role, acts as a methyl group carrier between MtbB and MtbA. In Methanosarcina acetivorans (strain ATCC 35395 / DSM 2834 / JCM 12185 / C2A), this protein is Dimethylamine corrinoid protein 3 (mtbC3).